The sequence spans 622 residues: 1,4-alpha-glucan branching enzyme GlgB (622 aa).

Catalysis depends on Asp306, which acts as the Nucleophile. Catalysis depends on Glu358, which acts as the Proton donor. The tract at residues 581 to 606 (YGGSNVGNRGAVHSDPVEKHGHSHSL) is disordered.

The protein belongs to the glycosyl hydrolase 13 family. GlgB subfamily. Monomer.

The catalysed reaction is Transfers a segment of a (1-&gt;4)-alpha-D-glucan chain to a primary hydroxy group in a similar glucan chain.. It functions in the pathway glycan biosynthesis; glycogen biosynthesis. Catalyzes the formation of the alpha-1,6-glucosidic linkages in glycogen by scission of a 1,4-alpha-linked oligosaccharide from growing alpha-1,4-glucan chains and the subsequent attachment of the oligosaccharide to the alpha-1,6 position. The polypeptide is 1,4-alpha-glucan branching enzyme GlgB (Salinibacter ruber (strain DSM 13855 / M31)).